The sequence spans 365 residues: Phospho-N-acetylmuramoyl-pentapeptide-transferase (365 aa).

10 helical membrane-spanning segments follow: residues 22–42 (YISVRIIMISITSLLITLALG), 74–94 (TMGGVLILSSVIISCLLWGDL), 95–115 (TSIYLWILILVVIFFGAIGFF), 134–154 (KFALQSIFSIVLAIVLFYLLS), 168–188 (SLYIPMGIVIFVVLAFFIING), 201–221 (GLAIVPVVLVAAGLGIYAYIE), 240–260 (LAEVAVFCAAVCGSGLAFLWF), 267–287 (VFMGDVGSLTLGAVLGVIAVM), 292–312 (LIFFIMGLLFVVEALSVMLQV), and 342–362 (KVVIRFWIISLILFLIGLAAI).

The protein belongs to the glycosyltransferase 4 family. MraY subfamily. The cofactor is Mg(2+).

The protein localises to the cell inner membrane. The catalysed reaction is UDP-N-acetyl-alpha-D-muramoyl-L-alanyl-gamma-D-glutamyl-meso-2,6-diaminopimeloyl-D-alanyl-D-alanine + di-trans,octa-cis-undecaprenyl phosphate = di-trans,octa-cis-undecaprenyl diphospho-N-acetyl-alpha-D-muramoyl-L-alanyl-D-glutamyl-meso-2,6-diaminopimeloyl-D-alanyl-D-alanine + UMP. The protein operates within cell wall biogenesis; peptidoglycan biosynthesis. Its function is as follows. Catalyzes the initial step of the lipid cycle reactions in the biosynthesis of the cell wall peptidoglycan: transfers peptidoglycan precursor phospho-MurNAc-pentapeptide from UDP-MurNAc-pentapeptide onto the lipid carrier undecaprenyl phosphate, yielding undecaprenyl-pyrophosphoryl-MurNAc-pentapeptide, known as lipid I. The protein is Phospho-N-acetylmuramoyl-pentapeptide-transferase of Francisella tularensis subsp. novicida (strain U112).